The sequence spans 84 residues: Small ribosomal subunit protein uS17 (84 aa).

This sequence belongs to the universal ribosomal protein uS17 family. Part of the 30S ribosomal subunit.

Its function is as follows. One of the primary rRNA binding proteins, it binds specifically to the 5'-end of 16S ribosomal RNA. This chain is Small ribosomal subunit protein uS17, found in Yersinia enterocolitica serotype O:8 / biotype 1B (strain NCTC 13174 / 8081).